The sequence spans 552 residues: Glutamine-dependent NAD(+) synthetase (552 aa).

Residues 11-253 (LRIAMAQFDF…DQWLVVDYAA (243 aa)) enclose the CN hydrolase domain. Catalysis depends on glutamate 52, which acts as the Proton acceptor; for glutaminase activity. Residue lysine 119 is the For glutaminase activity of the active site. An L-glutamine-binding site is contributed by tyrosine 125. The Nucleophile; for glutaminase activity role is filled by cysteine 157. L-glutamine-binding residues include serine 183 and lysine 189. The ligase stretch occupies residues 275–552 (AWRAVVRGLK…YPITNGYSGQ (278 aa)). 298-305 (GLSGGIDS) is an ATP binding site. Asparagine 381 is a deamido-NAD(+) binding site. Threonine 405 contacts ATP. Glutamate 410 and lysine 522 together coordinate deamido-NAD(+).

The protein in the C-terminal section; belongs to the NAD synthetase family.

It carries out the reaction deamido-NAD(+) + L-glutamine + ATP + H2O = L-glutamate + AMP + diphosphate + NAD(+) + H(+). Its pathway is cofactor biosynthesis; NAD(+) biosynthesis; NAD(+) from deamido-NAD(+) (L-Gln route): step 1/1. Catalyzes the ATP-dependent amidation of deamido-NAD to form NAD. Uses L-glutamine as a nitrogen source. This is Glutamine-dependent NAD(+) synthetase from Xanthomonas campestris pv. campestris (strain 8004).